A 504-amino-acid polypeptide reads, in one-letter code: MEFEAVRISPGKYRGDALLVGLFQDGPEPALALAALDAAVAAVVLEVISEEEFKPKSRQKLTVRVGGDTGLRKVVLVGLGEQAKYKPESLRQCIGEGARTLKAIKATTAGVWVPPLGEGGEEATVEALVEAIRLALHEDRRFRSKKSDSEENGNSNNGGENKLTKVSLVVAGEGDYAAAVRRGNILAEGTIFARELVSAPANYVTSVTLAEQATAIAEANGLECEILEKEDCERLGMGAYLGVAQGTDLPPKFIHLTYKPAHSAPRKRIAIIGKGITFDSGGLSIKPAKGMELMKVDMGGAAAALGAAKVLGQLKPDIEVHFIVAATENMVSGHAIHPGDILTASNGKTIEVDNTDAEGRLTLADALVFSEKLGVDAIVDLATLTGACVVALGNDIAGLLTENEELARQIRAAGEASGEKFWQLPMEESYFEGMKSVVADMRNTGSREGGTITAALFLKQFVEKTPWVHLDIAGPVWTEKQKGYTNRGGTGFGVRTLVRFVLAQ.

Positions 274 and 279 each coordinate Mn(2+). Residue K286 is part of the active site. Residues D297, D356, and E358 each contribute to the Mn(2+) site. Residue R360 is part of the active site.

The protein belongs to the peptidase M17 family. Mn(2+) serves as cofactor.

Its subcellular location is the cytoplasm. It carries out the reaction Release of an N-terminal amino acid, Xaa-|-Yaa-, in which Xaa is preferably Leu, but may be other amino acids including Pro although not Arg or Lys, and Yaa may be Pro. Amino acid amides and methyl esters are also readily hydrolyzed, but rates on arylamides are exceedingly low.. The enzyme catalyses Release of an N-terminal amino acid, preferentially leucine, but not glutamic or aspartic acids.. In terms of biological role, presumably involved in the processing and regular turnover of intracellular proteins. Catalyzes the removal of unsubstituted N-terminal amino acids from various peptides. In Gloeobacter violaceus (strain ATCC 29082 / PCC 7421), this protein is Probable cytosol aminopeptidase.